The primary structure comprises 131 residues: Class I hydrophobin 9 (131 aa).

A signal peptide spans 1-23 (MFARRAISIFAFMLVALSIFAAA). 4 disulfides stabilise this stretch: cysteine 52–cysteine 112, cysteine 59–cysteine 106, cysteine 60–cysteine 93, and cysteine 113–cysteine 126. N-linked (GlcNAc...) asparagine glycosylation is present at asparagine 53. A glycan (N-linked (GlcNAc...) asparagine) is linked at asparagine 115.

Belongs to the fungal hydrophobin family. Self-assembles to form functional amyloid fibrils called rodlets. Self-assembly into fibrillar rodlets occurs spontaneously at hydrophobic:hydrophilic interfaces and the rodlets further associate laterally to form amphipathic monolayers.

It localises to the secreted. The protein resides in the cell wall. Its function is as follows. Aerial growth, conidiation, and dispersal of filamentous fungi in the environment rely upon a capability of their secreting small amphipathic proteins called hydrophobins (HPBs) with low sequence identity. Class I can self-assemble into an outermost layer of rodlet bundles on aerial cell surfaces, conferring cellular hydrophobicity that supports fungal growth, development and dispersal; whereas Class II form highly ordered films at water-air interfaces through intermolecular interactions but contribute nothing to the rodlet structure. This is Class I hydrophobin 9 from Flammulina velutipes (Agaricus velutipes).